Reading from the N-terminus, the 560-residue chain is DNA-directed primase/polymerase protein (560 aa).

Residues 1–22 (MNRKWEAKLKQIEERASHYERK) are a coiled coil. Substrate contacts are provided by residues Arg76, 114-116 (DLE), and 165-169 (KFSRH). Mn(2+)-binding residues include Asp114 and Glu116. Positions 203 to 223 (EDDDSAPETTGHGFPHFSEAP) are disordered. Position 255 is a phosphoserine (Ser255). Substrate-binding positions include 288–291 (RNFR) and Lys297. Zn(2+) is bound by residues Cys419, His426, Cys446, and Cys451. Positions 419–452 (CENIGRAHKSNNIMILVDLKNEVWYQKCHDPVCK) match the Zinc knuckle motif motif. Positions 480 to 507 (TTDEADETRSNETQNPHKPSPSRLSTGA) are disordered. Residues 481–560 (TDEADETRSN…DELIIEVLQE (80 aa)) form an interaction with RPA1 region. Over residues 490–507 (NETQNPHKPSPSRLSTGA) the composition is skewed to polar residues. 2 short sequence motifs (RPA1-binding motif) span residues 513–527 (WDNG…EATE) and 548–556 (EIPDELIIE).

The protein belongs to the eukaryotic-type primase small subunit family. Interacts with RPA1; leading to recruitment to chromatin and stimulate DNA primase activity. Interacts with SSBP1. Interacts with POLDIP2; leading to enhance DNA polymerase activity. It depends on Mn(2+) as a cofactor.

The protein localises to the nucleus. Its subcellular location is the mitochondrion matrix. The protein resides in the chromosome. The enzyme catalyses ssDNA + n NTP = ssDNA/pppN(pN)n-1 hybrid + (n-1) diphosphate.. It catalyses the reaction DNA(n) + a 2'-deoxyribonucleoside 5'-triphosphate = DNA(n+1) + diphosphate. In terms of biological role, DNA primase and DNA polymerase required to tolerate replication-stalling lesions by bypassing them. Required to facilitate mitochondrial and nuclear replication fork progression by initiating de novo DNA synthesis using dNTPs and acting as an error-prone DNA polymerase able to bypass certain DNA lesions. Shows a high capacity to tolerate DNA damage lesions such as 8oxoG and abasic sites in DNA. Provides different translesion synthesis alternatives when DNA replication is stalled: able to synthesize DNA primers downstream of lesions, such as ultraviolet (UV) lesions, R-loops and G-quadruplexes, to allow DNA replication to continue. Can also realign primers ahead of 'unreadable lesions' such as abasic sites and 6-4 photoproduct (6-4 pyrimidine-pyrimidinone), thereby skipping the lesion. Repriming avoids fork degradation while leading to accumulation of internal ssDNA gaps behind the forks. Also able to incorporate nucleotides opposite DNA lesions such as 8oxoG, like a regular translesion synthesis DNA polymerase. Also required for reinitiating stalled forks after UV damage during nuclear DNA replication. Required for mitochondrial DNA (mtDNA) synthesis and replication, by reinitiating synthesis after UV damage or in the presence of chain-terminating nucleotides. Prevents APOBEC family-mediated DNA mutagenesis by repriming downstream of abasic site to prohibit error-prone translesion synthesis. Has non-overlapping function with POLH. In addition to its role in DNA damage response, also required to maintain efficient nuclear and mitochondrial DNA replication in unperturbed cells. The protein is DNA-directed primase/polymerase protein of Homo sapiens (Human).